A 499-amino-acid chain; its full sequence is Uridine-cytidine kinase A (499 aa).

The disordered stretch occupies residues 1–44; the sequence is MSDNSTTKVTTNDSPSLTTTTSTTTAPTTTTTTTTTPTHNHDTT. Residues 10–38 show a composition bias toward low complexity; that stretch reads TTNDSPSLTTTTSTTTAPTTTTTTTTTPT. 78–85 is an ATP binding site; it reads GGSASGKT.

This sequence belongs to the uridine kinase family.

The catalysed reaction is uridine + ATP = UMP + ADP + H(+). The enzyme catalyses cytidine + ATP = CMP + ADP + H(+). It functions in the pathway pyrimidine metabolism; CTP biosynthesis via salvage pathway; CTP from cytidine: step 1/3. It participates in pyrimidine metabolism; UMP biosynthesis via salvage pathway; UMP from uridine: step 1/1. Its function is as follows. Catalyzes the conversion of uridine into uridine monophosphate and cytidine into cytidine monophosphate in the pyrimidine salvage pathway. The polypeptide is Uridine-cytidine kinase A (udkA) (Dictyostelium discoideum (Social amoeba)).